The primary structure comprises 165 residues: Cysteine-rich hydrophobic domain-containing protein 2 (165 aa).

The stretch at 1-26 forms a coiled coil; it reads MADFDEIYEEEEDEERALEEQLLKYS. The CHIC motif (Cys-rich) signature appears at 88–106; it reads CGCLCCCCTLGCSMWPVIC.

This sequence belongs to the CHIC family. In terms of processing, palmitoylation in the CHIC motif is required for membrane association.

It localises to the membrane. Its subcellular location is the golgi apparatus. This Mus musculus (Mouse) protein is Cysteine-rich hydrophobic domain-containing protein 2 (Chic2).